We begin with the raw amino-acid sequence, 362 residues long: Adenosine deaminase (362 aa).

Residues H19 and H21 each contribute to the Zn(2+) site. Substrate contacts are provided by H21, D23, and G181. H208 contacts Zn(2+). E211 (proton donor) is an active-site residue. Residue D300 coordinates Zn(2+).

This sequence belongs to the metallo-dependent hydrolases superfamily. Adenosine and AMP deaminases family. Adenosine deaminase subfamily. It depends on Zn(2+) as a cofactor.

It catalyses the reaction adenosine + H2O + H(+) = inosine + NH4(+). It carries out the reaction 2'-deoxyadenosine + H2O + H(+) = 2'-deoxyinosine + NH4(+). Functionally, catalyzes the hydrolytic deamination of adenosine and 2-deoxyadenosine. This Mycolicibacterium vanbaalenii (strain DSM 7251 / JCM 13017 / BCRC 16820 / KCTC 9966 / NRRL B-24157 / PYR-1) (Mycobacterium vanbaalenii) protein is Adenosine deaminase.